The primary structure comprises 418 residues: Putative ion-transport protein YfeO (418 aa).

Helical transmembrane passes span 10 to 30 (LLLS…LIVV), 54 to 74 (DSPF…GLVI), 99 to 119 (ALLG…SLGP), 120 to 140 (EHPI…RLLP), 149 to 169 (ILAS…AALI), 186 to 206 (LFAP…FFHP), 223 to 243 (ILSG…AVWC), 258 to 278 (VLVL…GGPV), 300 to 320 (DYFL…ASGF), 322 to 342 (GGRI…LHEH), 343 to 363 (VPAV…VLVV), and 371 to 391 (LFMA…CIVM).

This sequence belongs to the chloride channel (TC 2.A.49) family.

Its subcellular location is the cell membrane. In Escherichia coli O17:K52:H18 (strain UMN026 / ExPEC), this protein is Putative ion-transport protein YfeO.